Reading from the N-terminus, the 277-residue chain is Putative envelope-preserving system protein Rv2742c (277 aa).

Basic and acidic residues predominate over residues 31–54 (RDENRQRHAQVDVQRRRDQPERGQ). Disordered stretches follow at residues 31 to 70 (RDEN…PDGR), 113 to 133 (QGSP…RLGR), and 180 to 210 (RQGS…HTAD). Positions 116 to 133 (PRRRERRRGQTAHQRLGR) are enriched in basic residues.

As to quaternary structure, interacts with Rv2743c.

In terms of biological role, involved in preservation of envelope integrity and tolerance to surface stress. Reverses the inhibitory effect of PspA on ClgR activity. Facilitates intracellular growth of M.tuberculosis. This is Putative envelope-preserving system protein Rv2742c from Mycobacterium tuberculosis (strain ATCC 25618 / H37Rv).